The primary structure comprises 198 residues: Iron-sulfur flavoprotein MJ0731 (198 aa).

C46, C49, C52, and C59 together coordinate [4Fe-4S] cluster.

The protein belongs to the SsuE family. Isf subfamily. In terms of assembly, homodimer. FMN serves as cofactor. [4Fe-4S] cluster is required as a cofactor.

In terms of biological role, redox-active protein probably involved in electron transport. In Methanocaldococcus jannaschii (strain ATCC 43067 / DSM 2661 / JAL-1 / JCM 10045 / NBRC 100440) (Methanococcus jannaschii), this protein is Iron-sulfur flavoprotein MJ0731.